The primary structure comprises 556 residues: Beta-caryophyllene synthase TPS9FN (556 aa).

Residues arginine 273, aspartate 310, aspartate 314, arginine 451, and aspartate 454 each contribute to the (2E,6E)-farnesyl diphosphate site. The Mg(2+) site is built by aspartate 310 and aspartate 314. Positions 310–314 (DDIYD) match the DDXXD motif motif. Mg(2+)-binding residues include aspartate 454, serine 458, and glutamate 462.

This sequence belongs to the terpene synthase family. Tpsb subfamily. Mg(2+) serves as cofactor. Mn(2+) is required as a cofactor. In terms of tissue distribution, expressed in glandular trichomes two to four weeks after flowering onset.

It carries out the reaction (2E,6E)-farnesyl diphosphate = (-)-(E)-beta-caryophyllene + diphosphate. The catalysed reaction is (2E,6E)-farnesyl diphosphate = alpha-humulene + diphosphate. The protein operates within secondary metabolite biosynthesis; terpenoid biosynthesis. In terms of biological role, involved in sesquiterpene olefins biosynthesis, constituants of cannabinoids and terpenoids-rich resins. Catalyzes mainly the conversion of (2E)-farnesyl diphosphate to beta-caryophyllene and alpha-humulene. Can also use (2E)-geranyl diphosphate as substrate with low efficiency. In Cannabis sativa (Hemp), this protein is Beta-caryophyllene synthase TPS9FN.